The sequence spans 163 residues: Phosphopantetheine adenylyltransferase (163 aa).

Position 11 (Thr-11) interacts with substrate. ATP contacts are provided by residues 11 to 12 and His-19; that span reads TF. Substrate contacts are provided by Lys-43, Leu-75, and Arg-89. Residues 90-92, Glu-100, and 125-131 contribute to the ATP site; these read GLR and YSFISST.

This sequence belongs to the bacterial CoaD family. Homohexamer. It depends on Mg(2+) as a cofactor.

The protein resides in the cytoplasm. The enzyme catalyses (R)-4'-phosphopantetheine + ATP + H(+) = 3'-dephospho-CoA + diphosphate. The protein operates within cofactor biosynthesis; coenzyme A biosynthesis; CoA from (R)-pantothenate: step 4/5. Functionally, reversibly transfers an adenylyl group from ATP to 4'-phosphopantetheine, yielding dephospho-CoA (dPCoA) and pyrophosphate. This Acinetobacter baumannii (strain SDF) protein is Phosphopantetheine adenylyltransferase.